We begin with the raw amino-acid sequence, 433 residues long: Enolase (433 aa).

Q163 contacts (2R)-2-phosphoglycerate. Catalysis depends on E205, which acts as the Proton donor. 3 residues coordinate Mg(2+): D242, E286, and D313. Residues K338, R367, S368, and K389 each contribute to the (2R)-2-phosphoglycerate site. Catalysis depends on K338, which acts as the Proton acceptor.

This sequence belongs to the enolase family. The cofactor is Mg(2+).

The protein resides in the cytoplasm. Its subcellular location is the secreted. The protein localises to the cell surface. The catalysed reaction is (2R)-2-phosphoglycerate = phosphoenolpyruvate + H2O. It functions in the pathway carbohydrate degradation; glycolysis; pyruvate from D-glyceraldehyde 3-phosphate: step 4/5. Its function is as follows. Catalyzes the reversible conversion of 2-phosphoglycerate (2-PG) into phosphoenolpyruvate (PEP). It is essential for the degradation of carbohydrates via glycolysis. This chain is Enolase, found in Koribacter versatilis (strain Ellin345).